A 357-amino-acid polypeptide reads, in one-letter code: 3-dehydroquinate synthase (357 aa).

Residues 99 to 103 (GATGD), 123 to 124 (TT), K135, K144, and 162 to 165 (FLET) contribute to the NAD(+) site. Residues E177, H247, and H261 each coordinate Zn(2+).

The protein belongs to the sugar phosphate cyclases superfamily. Dehydroquinate synthase family. The cofactor is Co(2+). Requires Zn(2+) as cofactor. NAD(+) serves as cofactor.

The protein localises to the cytoplasm. It catalyses the reaction 7-phospho-2-dehydro-3-deoxy-D-arabino-heptonate = 3-dehydroquinate + phosphate. Its pathway is metabolic intermediate biosynthesis; chorismate biosynthesis; chorismate from D-erythrose 4-phosphate and phosphoenolpyruvate: step 2/7. Its function is as follows. Catalyzes the conversion of 3-deoxy-D-arabino-heptulosonate 7-phosphate (DAHP) to dehydroquinate (DHQ). This chain is 3-dehydroquinate synthase, found in Macrococcus caseolyticus (strain JCSC5402) (Macrococcoides caseolyticum).